Here is a 161-residue protein sequence, read N- to C-terminus: Probable metalloprotease HVO_1016 (161 aa).

In terms of domain architecture, MPN spans valine 10–valine 131. Glutamate 31 (proton donor/acceptor) is an active-site residue. Zn(2+) is bound by residues histidine 87, histidine 89, and aspartate 100. The JAMM motif signature appears at histidine 87 to aspartate 100.

This sequence belongs to the peptidase M67B family. As to quaternary structure, monomer and homodimer. Zn(2+) serves as cofactor.

Functionally, probable metalloprotease. Does not hydrolyze SAMP1- and SAMP2-protein conjugates, diglycine-AMC, Ub-AMC, hemoglobin, cytochrome c, carbonic anhydrase, creatinine phosphokinase, beta-amylase and bovine serum albumin. The protein is Probable metalloprotease HVO_1016 of Haloferax volcanii (strain ATCC 29605 / DSM 3757 / JCM 8879 / NBRC 14742 / NCIMB 2012 / VKM B-1768 / DS2) (Halobacterium volcanii).